Reading from the N-terminus, the 843-residue chain is Translation initiation factor IF-2 (843 aa).

Residues 198 to 219 (YKREEEEKKSKAKKAGGKGFKK) are disordered. The segment covering 207–219 (SKAKKAGGKGFKK) has biased composition (basic residues). The 168-residue stretch at 345-512 (SRAPVVTIMG…AVLLQSEVLE (168 aa)) folds into the tr-type G domain. Positions 354-361 (GHVDHGKT) are G1. 354–361 (GHVDHGKT) is a GTP binding site. Positions 379 to 383 (GITQH) are G2. The interval 400–403 (DTPG) is G3. GTP is bound by residues 400-404 (DTPGH) and 454-457 (NKID). Positions 454-457 (NKID) are G4. The segment at 490–492 (SAK) is G5.

This sequence belongs to the TRAFAC class translation factor GTPase superfamily. Classic translation factor GTPase family. IF-2 subfamily.

It is found in the cytoplasm. Its function is as follows. One of the essential components for the initiation of protein synthesis. Protects formylmethionyl-tRNA from spontaneous hydrolysis and promotes its binding to the 30S ribosomal subunits. Also involved in the hydrolysis of GTP during the formation of the 70S ribosomal complex. The polypeptide is Translation initiation factor IF-2 (Francisella tularensis subsp. tularensis (strain WY96-3418)).